A 350-amino-acid polypeptide reads, in one-letter code: Small ribosomal subunit biogenesis GTPase RsgA (350 aa).

Over residues 1–17 the composition is skewed to polar residues; sequence MSKNKLSKGQQRRVNAN. The disordered stretch occupies residues 1–33; that stretch reads MSKNKLSKGQQRRVNANHQRRLKTSKEKPDYDD. The 170-residue stretch at 104 to 273 folds into the CP-type G domain; that stretch reads TSVLTRPDFY…VIDSPGVREF (170 aa). Residues 160–163 and 214–222 contribute to the GTP site; these read NKID and GQSGVGKSS. Cys-297, Cys-302, His-304, and Cys-310 together coordinate Zn(2+).

The protein belongs to the TRAFAC class YlqF/YawG GTPase family. RsgA subfamily. Monomer. Associates with 30S ribosomal subunit, binds 16S rRNA. It depends on Zn(2+) as a cofactor.

It localises to the cytoplasm. In terms of biological role, one of several proteins that assist in the late maturation steps of the functional core of the 30S ribosomal subunit. Helps release RbfA from mature subunits. May play a role in the assembly of ribosomal proteins into the subunit. Circularly permuted GTPase that catalyzes slow GTP hydrolysis, GTPase activity is stimulated by the 30S ribosomal subunit. This is Small ribosomal subunit biogenesis GTPase RsgA from Escherichia fergusonii (strain ATCC 35469 / DSM 13698 / CCUG 18766 / IAM 14443 / JCM 21226 / LMG 7866 / NBRC 102419 / NCTC 12128 / CDC 0568-73).